Here is a 1117-residue protein sequence, read N- to C-terminus: Protein cup (1117 aa).

A disordered region spans residues Met-1–Ser-106. Pro residues-rich tracts occupy residues Tyr-54–Val-64 and Cys-95–Pro-104. Phosphoserine is present on residues Ser-263 and Ser-270. The interval Ser-270–Ser-326 is disordered. The span at Glu-283 to Pro-294 shows a compositional bias: polar residues. The short motif at Tyr-327–Met-333 is the YXXXXLphi motif 1 element. Residues Ser-347 and Ser-350 each carry the phosphoserine modification. The YXXXXLphi motif 2 signature appears at Glu-363–Arg-369. 6 disordered regions span residues Ile-493–Ser-528, Lys-596–His-618, Thr-654–Phe-673, Ser-679–Ser-728, Gly-984–Pro-1004, and Ile-1016–Phe-1051. Thr-503 bears the Phosphothreonine mark. Residues Ser-509, Ser-513, Ser-520, Ser-523, and Ser-524 each carry the phosphoserine modification. 2 stretches are compositionally biased toward low complexity: residues Ser-679 to Asn-712 and Gln-988 to Gln-1001.

It belongs to the 4E-T/EIF4E-T family. Component of the osk RNP complex, which is composed of at least exu, yps, aret/bruno, cup, and the mRNA of osk. Interacts with the decapping activators me31B and tral. Component of the nanos RNP complex, which is composed of at least smg, cup, tral, me31B, the CCR4-NOT complex members Rga/NOT2 and Caf1, and the mRNA of nanos (nos). Interacts with btz. Recruited to the 3'-UTR of nos and osk mRNAs by smg and btz, respectively. Forms a ribonucleoprotein complex (RNP) containing at least me31B, eIF4E1, cup, tral and pAbp; this interaction is required for the translational silencing of maternal mRNAs during the maternal-to-zygotic transition. No interaction was detected with pAbp in 1-5 hour embryos. Interacts with osk and vas. Interacts with Pop2, twin/CCR4, Rga, Not3 and Not1 which are all core components of the CCR4-NOT deadenylase complex; interaction with the complex is required for cup deadenylation activity. Interacts with nanos. Interacts with smg. Interacts (via YXXXXLphi motifs) with eIF4E1; the interaction promotes retention of cup in the cytoplasm. Interacts with orb; the interaction represses the orb positive autoregulatory loop. Interacts with Nup154. As to expression, predominantly expressed in ovaries and in 0-2 hours old embryos. Weakly expressed in testis. Expressed in young embryos through stage 9, then it decreases throughout the rest of embryogenesis. In ovaries, it is expressed in germ cells throughout pre-vitellogenic development, but is not expressed in the somatic follicle cells. In germarial cysts, the protein (and not the transcripts) is transported selectively into the oocyte.

Its subcellular location is the cytoplasm. It localises to the nucleus. The protein localises to the cytoplasmic ribonucleoprotein granule. Adapter protein that plays a central role in localization of transcripts in the oocyte and in young embryos. Maintains RNA targets in a repressed state by promoting their deadenylation and protects deadenylated mRNAs from further degradation. Binds to and recruits eIF-4E to the 3'-UTR of some mRNA targets which prevents interaction between eIF4E1 and eIF4G. This may contribute to translational repression but does not appear to be necessary for it to occur. Can promote translational repression independently of deadenylation and eIF4E1 binding. Required for correct localization of eIF4E1 in the developing oocyte. Required for translational repression of oskar (osk) mRNA. Also required for the translational repression of nanos (nos) mRNA. Promotes the accumulation of the germ plasm components osk, vas and stau at the posterior pole of the oocyte and is required for germ cell development. Represses orb positive autoregulatory activity which prevents premature activation of orb and ensures its accumulation specifically in the developing oocyte. In 0-1 hour embryos, forms a complex with me31B, cup, tral and pAbp which binds to various mRNAs including maternal mRNAs, and down-regulates their expression during the maternal-to-zygotic transition. This is Protein cup (cup) from Drosophila melanogaster (Fruit fly).